Here is a 215-residue protein sequence, read N- to C-terminus: Pyrrolidone-carboxylate peptidase (215 aa).

Catalysis depends on residues Glu-80, Cys-143, and His-167.

It belongs to the peptidase C15 family. As to quaternary structure, homotetramer.

It localises to the cytoplasm. It catalyses the reaction Release of an N-terminal pyroglutamyl group from a polypeptide, the second amino acid generally not being Pro.. Removes 5-oxoproline from various penultimate amino acid residues except L-proline. The chain is Pyrrolidone-carboxylate peptidase from Bacillus mycoides (strain KBAB4) (Bacillus weihenstephanensis).